The primary structure comprises 700 residues: Polyribonucleotide nucleotidyltransferase (700 aa).

Positions 484 and 490 each coordinate Mg(2+). The 60-residue stretch at 551 to 610 (PRVIRMVVDPEKIREIIGPGGKTISKIIAETGVKIDIEEDGRLYITASDLRSGERAKQMI) folds into the KH domain. Residues 620-688 (GEIYLGKVLR…KLGRISLSRK (69 aa)) form the S1 motif domain.

The protein belongs to the polyribonucleotide nucleotidyltransferase family. Requires Mg(2+) as cofactor.

The protein localises to the cytoplasm. It catalyses the reaction RNA(n+1) + phosphate = RNA(n) + a ribonucleoside 5'-diphosphate. Involved in mRNA degradation. Catalyzes the phosphorolysis of single-stranded polyribonucleotides processively in the 3'- to 5'-direction. The protein is Polyribonucleotide nucleotidyltransferase of Thermoanaerobacter pseudethanolicus (strain ATCC 33223 / 39E) (Clostridium thermohydrosulfuricum).